The chain runs to 873 residues: DNA mismatch repair protein MutS (873 aa).

Gly601–Ser608 provides a ligand contact to ATP.

This sequence belongs to the DNA mismatch repair MutS family.

This protein is involved in the repair of mismatches in DNA. It is possible that it carries out the mismatch recognition step. This protein has a weak ATPase activity. This chain is DNA mismatch repair protein MutS, found in Staphylococcus epidermidis (strain ATCC 12228 / FDA PCI 1200).